The chain runs to 294 residues: NAD kinase (294 aa).

Asp-74 acts as the Proton acceptor in catalysis. Residues 74–75 (DG), 148–149 (NE), His-159, Arg-176, Asp-178, 189–194 (TAYSLS), and Gln-249 each bind NAD(+).

The protein belongs to the NAD kinase family. A divalent metal cation is required as a cofactor.

The protein localises to the cytoplasm. It carries out the reaction NAD(+) + ATP = ADP + NADP(+) + H(+). Involved in the regulation of the intracellular balance of NAD and NADP, and is a key enzyme in the biosynthesis of NADP. Catalyzes specifically the phosphorylation on 2'-hydroxyl of the adenosine moiety of NAD to yield NADP. The sequence is that of NAD kinase from Vibrio atlanticus (strain LGP32) (Vibrio splendidus (strain Mel32)).